A 137-amino-acid polypeptide reads, in one-letter code: 5-hydroxyisourate hydrolase (137 aa).

The first 23 residues, 1–23 (MLKRYLVLSVVTAAFSLPSLVYA), serve as a signal peptide directing secretion. The substrate site is built by H32, R70, and Y134.

The protein belongs to the transthyretin family. 5-hydroxyisourate hydrolase subfamily. Homotetramer.

The protein resides in the periplasm. It carries out the reaction 5-hydroxyisourate + H2O = 5-hydroxy-2-oxo-4-ureido-2,5-dihydro-1H-imidazole-5-carboxylate + H(+). Catalyzes the hydrolysis of 5-hydroxyisourate (HIU) to 2-oxo-4-hydroxy-4-carboxy-5-ureidoimidazoline (OHCU). The polypeptide is 5-hydroxyisourate hydrolase (hiuH) (Escherichia coli O157:H7).